We begin with the raw amino-acid sequence, 950 residues long: MLRNEYSAHEIEAKWQRIWEEEGVFHAEPDSRKKFFLTIPYPYLNGNLHAGHTRTFTIGDAIARYHRMLGENVLFPMAFHATGTPIVGLSELIANRDPLIWDVYTRLHGIPEEELEKLTTPEAIVDYFRKQAKLAMRSIGYSIDWRREFTTTDPAYNRFIEWQFGILREKGYVTKGSHPVRWCPNDQNPVEDHDILRGEDATILDFTLIKFRLDDKVLPCATLRPETVFGVTNLWVNPNVVHYIARVNDEVWIVSPQAYHKLTFTDRSVKKIGEIPGEELIGKKARNPVTGDEIIILPATFVDPDSGSGIVMSVPAHAPLDYLALRDLYDADLSKYGITEDLRKIKFISLISVPEYGEFPAVDAVNELGVKDQNDPKAEEATKLVYRREFHNGVLKEITGRYAGTPVHRIKDILLQDLINQGVAEIFYEFSETPVICRCGARCVVKMVRDQWFLEYSDPVWKSRVLECLAGMQIIPEEMRAEFINKIDWLKDKACARRKGLGTRLPWDREWLIESLADSTIYMAFYILAKYVNAGMKIDRLVPQFFDYIFLGKGTPEEVSSLTGVDVDTVRRIREDFEYWYPVDLRTSGKDLVANHLLFFLYHHVAIFPESLWPRAIAVNGFVSLEGQKMSKSRGPILTLKQAVAENGADVTRLYILANAEYTQDADWRNDGAQATRGQVERFYTLAREIIERNDIDESAELTLIDRWMLSRLQRRIIETTDALNNIQTRRALQSAFYHMLNDLRWYERRGGRNQLRRILNVWVRLMAPFTPHICEEIWQNIGEGYVSRAPWPVPDASLIDEQAERAEAYLEQTQKDIEEIIRVTKTKPRRIVLYTTPVWKREMLRLALEVSKGGRLDMGALMKSAMGHPEIQSHKKDAPKYGGKLAKSVHALSGDVLALDELGILSREREYLSQAFGCPVEVYSADNPPYDPKGRAQNAEPGRPAIYIE.

A 'HIGH' region motif is present at residues 42-52 (PYLNGNLHAGH). The 'KMSKS' region signature appears at 629–633 (KMSKS). Lys632 contributes to the ATP binding site. The disordered stretch occupies residues 928–950 (NPPYDPKGRAQNAEPGRPAIYIE).

The protein belongs to the class-I aminoacyl-tRNA synthetase family.

It is found in the cytoplasm. The enzyme catalyses tRNA(Leu) + L-leucine + ATP = L-leucyl-tRNA(Leu) + AMP + diphosphate. The sequence is that of Leucine--tRNA ligase from Methanothrix thermoacetophila (strain DSM 6194 / JCM 14653 / NBRC 101360 / PT) (Methanosaeta thermophila).